We begin with the raw amino-acid sequence, 193 residues long: MTDYFLLFVGTVLVNNFVLVKFLGLCPFMGVSKKLETAIGMGFATTFVMTLASVCSWLVNTFILLPLDLIYLRTLSFILVIAVVVQFTELVVRKTSPTLYRLLGIFLPLITTNCAVLGVALLNINQSHDFLQSAIYGFGAAAGFSLVMVLFAAIRERLAVADVPAPFKGSSIGLITAGLMSLAFMGFSGLVKF.

6 helical membrane-spanning segments follow: residues 5-25 (FLLF…FLGL), 39-59 (IGMG…SWLV), 62-82 (FILL…LVIA), 102-122 (LLGI…VALL), 134-154 (AIYG…FAAI), and 171-191 (SIGL…SGLV).

This sequence belongs to the NqrDE/RnfAE family. In terms of assembly, the complex is composed of six subunits: RnfA, RnfB, RnfC, RnfD, RnfE and RnfG.

Its subcellular location is the cell inner membrane. In terms of biological role, part of a membrane-bound complex that couples electron transfer with translocation of ions across the membrane. This Photorhabdus laumondii subsp. laumondii (strain DSM 15139 / CIP 105565 / TT01) (Photorhabdus luminescens subsp. laumondii) protein is Ion-translocating oxidoreductase complex subunit A.